Here is a 319-residue protein sequence, read N- to C-terminus: Acetyl-coenzyme A carboxylase carboxyl transferase subunit alpha (319 aa).

The 255-residue stretch at 39-293 (RLQKKSNDLT…KAVLEKQLHE (255 aa)) folds into the CoA carboxyltransferase C-terminal domain.

Belongs to the AccA family. In terms of assembly, acetyl-CoA carboxylase is a heterohexamer composed of biotin carboxyl carrier protein (AccB), biotin carboxylase (AccC) and two subunits each of ACCase subunit alpha (AccA) and ACCase subunit beta (AccD).

The protein resides in the cytoplasm. The catalysed reaction is N(6)-carboxybiotinyl-L-lysyl-[protein] + acetyl-CoA = N(6)-biotinyl-L-lysyl-[protein] + malonyl-CoA. It functions in the pathway lipid metabolism; malonyl-CoA biosynthesis; malonyl-CoA from acetyl-CoA: step 1/1. In terms of biological role, component of the acetyl coenzyme A carboxylase (ACC) complex. First, biotin carboxylase catalyzes the carboxylation of biotin on its carrier protein (BCCP) and then the CO(2) group is transferred by the carboxyltransferase to acetyl-CoA to form malonyl-CoA. This Neisseria meningitidis serogroup B (strain ATCC BAA-335 / MC58) protein is Acetyl-coenzyme A carboxylase carboxyl transferase subunit alpha.